Here is a 788-residue protein sequence, read N- to C-terminus: Ribosome biogenesis protein ERB1 (788 aa).

The segment at 1–91 is disordered; that stretch reads MGDLKGSRKR…SKPIREKSKP (91 aa). Residues 38–50 show a composition bias toward basic and acidic residues; it reads LSDKSHDTEHSSD. The span at 51 to 78 shows a compositional bias: acidic residues; it reads SEIELVDDLSSDDGEEYEDEFDSDEIPS. Residues 80-91 show a composition bias toward basic and acidic residues; it reads IESKPIREKSKP. WD repeat units follow at residues 433 to 472, 476 to 516, 613 to 651, 654 to 699, 703 to 742, and 758 to 788; these read GHSGRVRTLAIDPTGVWLASGGDDGTVRVWELLTGRQIWS, SDEE…PEME, KGGGPPQAAHFHPSKPILFVANQRTIRSYDLSRQSLVKI, PGAR…RPYK, YHQKAIRAVRYHSNYPLFADASDDGSLQIFHGSVTGDLLS, and TGELGVLDLDWHPREAWCVSAGADGTCRLWT.

This sequence belongs to the WD repeat BOP1/ERB1 family. In terms of assembly, component of the NOP7 complex, composed of ERB1, NOP7 and YTM1. The complex is held together by ERB1, which interacts with NOP7 via its N-terminal domain and with YTM1 via a high-affinity interaction between the seven-bladed beta-propeller domains of the 2 proteins. The NOP7 complex associates with the 66S pre-ribosome.

It localises to the nucleus. It is found in the nucleolus. The protein localises to the nucleoplasm. Functionally, component of the NOP7 complex, which is required for maturation of the 25S and 5.8S ribosomal RNAs and formation of the 60S ribosome. In Ajellomyces capsulatus (strain NAm1 / WU24) (Darling's disease fungus), this protein is Ribosome biogenesis protein ERB1.